The primary structure comprises 227 residues: MSTSLSVTELQVENFTFPPTVKPPGSTKTLFLGGAGERGLEIQGKFIKFTAIGVYLEDSAVNCLGVKWKGKSAVELTESVEFFRDVVTGDFEKFIRVTMILPLTGQQYSEKVSENCVAIWKSLGIYTDAEAKAIEKFIEVFKDENFPPGSSILFTISGQGSLTIGFSKDSSVPEGGKVVIENKLLANSVLESVIGKNGVSPAAKESLASRLSPLFNDCGADSEKPQS.

Residues Thr50, Asn115, and Ser192 each contribute to the substrate site.

Belongs to the chalcone isomerase family. Fibers.

The enzyme catalyses a chalcone = a flavanone.. It functions in the pathway secondary metabolite biosynthesis; flavonoid biosynthesis. In terms of biological role, catalyzes the intramolecular cyclization of bicyclic chalcones into tricyclic (S)-flavanones. Responsible for the isomerization of 4,2',4',6'-tetrahydroxychalcone (also termed chalcone) into naringenin. This chain is Chalcone--flavanone isomerase (CHI), found in Gossypium hirsutum (Upland cotton).